Consider the following 397-residue polypeptide: Chorismate synthase (397 aa).

Residues Arg40 and Arg46 each coordinate NADP(+). FMN is bound by residues 129 to 131 (RSS), 257 to 258 (QA), Gly302, 317 to 321 (KPISS), and Arg343.

The protein belongs to the chorismate synthase family. Homotetramer. FMNH2 is required as a cofactor.

The enzyme catalyses 5-O-(1-carboxyvinyl)-3-phosphoshikimate = chorismate + phosphate. Its pathway is metabolic intermediate biosynthesis; chorismate biosynthesis; chorismate from D-erythrose 4-phosphate and phosphoenolpyruvate: step 7/7. In terms of biological role, catalyzes the anti-1,4-elimination of the C-3 phosphate and the C-6 proR hydrogen from 5-enolpyruvylshikimate-3-phosphate (EPSP) to yield chorismate, which is the branch point compound that serves as the starting substrate for the three terminal pathways of aromatic amino acid biosynthesis. This reaction introduces a second double bond into the aromatic ring system. The protein is Chorismate synthase of Chlorobium limicola (strain DSM 245 / NBRC 103803 / 6330).